We begin with the raw amino-acid sequence, 237 residues long: Proteasome subunit alpha (237 aa).

The protein belongs to the peptidase T1A family. In terms of assembly, the 20S proteasome core is composed of 14 alpha and 14 beta subunits that assemble into four stacked heptameric rings, resulting in a barrel-shaped structure. The two inner rings, each composed of seven catalytic beta subunits, are sandwiched by two outer rings, each composed of seven alpha subunits. The catalytic chamber with the active sites is on the inside of the barrel. Has a gated structure, the ends of the cylinder being occluded by the N-termini of the alpha-subunits. Is capped by the proteasome-associated ATPase, ARC.

Its subcellular location is the cytoplasm. It functions in the pathway protein degradation; proteasomal Pup-dependent pathway. Its activity is regulated as follows. The formation of the proteasomal ATPase ARC-20S proteasome complex, likely via the docking of the C-termini of ARC into the intersubunit pockets in the alpha-rings, may trigger opening of the gate for substrate entry. Interconversion between the open-gate and close-gate conformations leads to a dynamic regulation of the 20S proteasome proteolysis activity. Functionally, component of the proteasome core, a large protease complex with broad specificity involved in protein degradation. The sequence is that of Proteasome subunit alpha from Kineococcus radiotolerans (strain ATCC BAA-149 / DSM 14245 / SRS30216).